A 161-amino-acid polypeptide reads, in one-letter code: MPQNASVIITQATAVITGSFLSGLMMGLSVVDIPVVLDTATQASQLLQHFTRLYDIGHKMMPSLAVTTCLLYGYTASSTRTTGGSGLPHIIAAVTTISMVPFTWLVMAPTNNALFRMHANPAAANLGEVRRLLVRWAQLHAVRSLFPLMGSVLGLRQILRE.

The N-linked (GlcNAc...) asparagine glycan is linked to asparagine 4. The next 4 membrane-spanning stretches (helical) occupy residues valine 15 to valine 35, isoleucine 56 to tyrosine 74, leucine 87 to methionine 107, and tryptophan 136 to leucine 155.

The protein belongs to the anthrone oxygenase family. As to expression, specifically expressed in conidia.

The protein localises to the membrane. It catalyses the reaction emodin anthrone + O2 = emodin + H2O + H(+). It functions in the pathway secondary metabolite biosynthesis. Functionally, anthrone oxygenase; part of the gene cluster that mediates the biosynthesis of trypacidin, a mycotoxin with antiprotozoal activity and that plays a role in the infection process. The pathway begins with the synthesis of atrochrysone thioester by the polyketide synthase (PKS) tpcC. The atrochrysone carboxyl ACP thioesterase tpcB then breaks the thioester bond and releases the atrochrysone carboxylic acid from tpcC. The decarboxylase tpcK converts atrochrysone carboxylic acid to atrochrysone which is further reduced into emodin anthrone. The next step is performed by the emodin anthrone oxygenase tpcL that catalyzes the oxidation of emodinanthrone to emodin. Emodin O-methyltransferase encoded by tpcA catalyzes methylation of the 8-hydroxy group of emodin to form questin. Ring cleavage of questin by questin oxidase tpcI leads to desmethylsulochrin via several intermediates including questin epoxide. Another methylation step catalyzed by tpcM leads to the formation of sulochrin which is further converted to monomethylsulfochrin by tpcH. Finally, the tpcJ catalyzes the conversion of monomethylsulfochrin to trypacidin. Trypacidin is toxic for human pulmonary and bronchial epithelial cells by initiating the intracellular formation of nitric oxide (NO) and hydrogen peroxide (H(2)O(2)), thus triggering host necrotic cell death. The trypacidin pathway is also able to produce endocrocin via a distinct route from the endocrocin Enc pathway. The polypeptide is Anthrone oxygenase tpcL (Aspergillus fumigatus (strain ATCC MYA-4609 / CBS 101355 / FGSC A1100 / Af293) (Neosartorya fumigata)).